The following is a 261-amino-acid chain: (S)-ureidoglycine aminohydrolase (261 aa).

The Cupin type-2 domain maps to 184-230; sequence LSFAPGASHGYIETHVQEHGAYILSGQGVYNLDNNWIPVKKGDYIFM. Residues E196, H198, H202, and Q236 each contribute to the Mn(2+) site. E196 provides a ligand contact to substrate. Q236, Y249, and K253 together coordinate substrate.

This sequence belongs to the UGHY family. As to quaternary structure, monomer. Mn(2+) serves as cofactor.

It is found in the cytoplasm. The catalysed reaction is (S)-2-ureidoglycine + H2O = (S)-ureidoglycolate + NH4(+). Its function is as follows. Involved in the anaerobic nitrogen utilization via the assimilation of allantoin. Catalyzes the second stereospecific hydrolysis reaction (deamination) of the allantoin degradation pathway, producing S-ureidoglycolate and ammonia from S-ureidoglycine. The chain is (S)-ureidoglycine aminohydrolase (allE) from Escherichia coli (strain K12).